A 309-amino-acid chain; its full sequence is HPr kinase/phosphorylase (309 aa).

Residues H138 and K159 contribute to the active site. An ATP-binding site is contributed by 153–160 (GKSGIGKS). Mg(2+) is bound at residue S160. The active-site Proton acceptor; for phosphorylation activity. Proton donor; for dephosphorylation activity is D177. The tract at residues 201 to 210 (IEVRGIGILD) is important for the catalytic mechanism of both phosphorylation and dephosphorylation. A Mg(2+)-binding site is contributed by E202. R243 is a catalytic residue. The tract at residues 264-269 (PIKPAR) is important for the catalytic mechanism of dephosphorylation.

Belongs to the HPrK/P family. Homohexamer. Mg(2+) serves as cofactor.

It catalyses the reaction [HPr protein]-L-serine + ATP = [HPr protein]-O-phospho-L-serine + ADP + H(+). The catalysed reaction is [HPr protein]-O-phospho-L-serine + phosphate + H(+) = [HPr protein]-L-serine + diphosphate. In terms of biological role, catalyzes the ATP- as well as the pyrophosphate-dependent phosphorylation of a specific serine residue in HPr, a phosphocarrier protein of the phosphoenolpyruvate-dependent sugar phosphotransferase system (PTS). HprK/P also catalyzes the pyrophosphate-producing, inorganic phosphate-dependent dephosphorylation (phosphorolysis) of seryl-phosphorylated HPr (P-Ser-HPr). The two antagonistic activities of HprK/P are regulated by several intracellular metabolites, which change their concentration in response to the absence or presence of rapidly metabolisable carbon sources (glucose, fructose, etc.) in the growth medium. Therefore, by controlling the phosphorylation state of HPr, HPrK/P is a sensor enzyme that plays a major role in the regulation of carbon metabolism and sugar transport: it mediates carbon catabolite repression (CCR), and regulates PTS-catalyzed carbohydrate uptake and inducer exclusion. This Alkaliphilus metalliredigens (strain QYMF) protein is HPr kinase/phosphorylase.